The chain runs to 192 residues: uncharacterized protein (192 aa).

Residues 29–160 (QRQAAVLIPV…PLDVYRRGNS (132 aa)) form the Nudix hydrolase domain. A Nudix box motif is present at residues 67 to 89 (GAVDSTDASLIAAALREAQEEVA). Mg(2+) contacts are provided by glutamate 83 and glutamate 87.

It belongs to the Nudix hydrolase family. PCD1 subfamily. The cofactor is Mn(2+). Requires Mg(2+) as cofactor.

Its function is as follows. Probably mediates the hydrolysis of some nucleoside diphosphate derivatives. This is an uncharacterized protein from Salmonella dublin (strain CT_02021853).